A 129-amino-acid chain; its full sequence is Iron-sulfur cluster assembly 1 homolog, mitochondrial (129 aa).

The transit peptide at 1–12 directs the protein to the mitochondrion; the sequence is MASSVVRATVRA. Fe cation contacts are provided by Cys57, Cys121, and Cys123.

It belongs to the HesB/IscA family.

The protein localises to the mitochondrion. In terms of biological role, involved in the maturation of mitochondrial 4Fe-4S proteins functioning late in the iron-sulfur cluster assembly pathway. Probably involved in the binding of an intermediate of Fe/S cluster assembly. In Gallus gallus (Chicken), this protein is Iron-sulfur cluster assembly 1 homolog, mitochondrial (ISCA1).